The following is a 224-amino-acid chain: Synaptogyrin-2 (224 aa).

Met1 carries the post-translational modification N-acetylmethionine. Ser3 is subject to Phosphoserine. The MARVEL domain occupies 20-171 (FLSQPQVVTR…LASLAYQRYK (152 aa)). A run of 4 helical transmembrane segments spans residues 31–51 (VSMV…YTNI), 72–92 (SAIG…DAFF), 105–125 (VIGD…GFCF), and 147–167 (AAIT…SLAY).

Belongs to the synaptogyrin family. In terms of processing, may be tyrosine phosphorylated by Src.

The protein localises to the cytoplasmic vesicle membrane. It localises to the cytoplasmic vesicle. The protein resides in the secretory vesicle. It is found in the synaptic vesicle membrane. May play a role in regulated exocytosis. In neuronal cells, modulates the localization of synaptophysin/SYP into synaptic-like microvesicles and may therefore play a role in the formation and/or the maturation of this vesicles. May also play a role in GLUT4 storage and transport to the plasma membrane. The chain is Synaptogyrin-2 from Mus musculus (Mouse).